A 469-amino-acid polypeptide reads, in one-letter code: F-box only protein 3 (469 aa).

Positions 10-56 (PLTLESLPTDPLLLILSFLDYRDLINCCYVSRRLSQLSSHDPLWRRH) constitute an F-box domain. Residues 278–408 (VATTGDITVS…FHMACPTFRV (131 aa)) form the ApaG domain. The span at 419 to 449 (EYEEMEEEEEEEEEEDDDDSADMDESDDDEE) shows a compositional bias: acidic residues. The segment at 419–454 (EYEEMEEEEEEEEEEDDDDSADMDESDDDEEERQRR) is disordered.

In terms of assembly, part of a SCF (SKP1-cullin-F-box) protein ligase complex SCF(FBXO3) consisting of FBXO3, SKP1, CUL1 and RBX1. Interacts with PML, interaction is direct and takes place either alone or within the SCF complex.

It is found in the nucleus. The protein operates within protein modification; protein ubiquitination. In terms of biological role, substrate recognition component of the SCF (SKP1-CUL1-F-box protein)-type E3 ubiquitin ligase complex, SCF(FBXO3), which mediates the ubiquitination and subsequent proteasomal degradation of target proteins. Mediates the ubiquitination of HIPK2 and probably that of EP300, leading to rapid degradation by the proteasome. In the presence of PML, HIPK2 ubiquitination still occurs, but degradation is prevented. PML, HIPK2 and FBXO3 may act synergically to activate p53/TP53-dependent transactivation. The SCF(FBXO3) also acts as a regulator of inflammation by mediating ubiquitination and degradation of FBXL2 in response to lipopolysaccharide (LPS). The SCF(FBXO3) complex specifically recognizes FBXL2 phosphorylated at 'Thr-404' and promotes its ubiquitination. The protein is F-box only protein 3 (FBXO3) of Bos taurus (Bovine).